The sequence spans 349 residues: Sensory histidine kinase/phosphatase NtrB (349 aa).

The region spanning 5–78 (TQPDAGQILN…SLEAGQGFTD (74 aa)) is the PAS domain. Positions 136–349 (GLAHEIKNPL…EFSVYLPIRK (214 aa)) constitute a Histidine kinase domain. At His139 the chain carries Phosphohistidine; by autocatalysis. Residue Lys329 coordinates ATP.

Autophosphorylated.

Its subcellular location is the cytoplasm. The enzyme catalyses ATP + protein L-histidine = ADP + protein N-phospho-L-histidine.. Functionally, member of the two-component regulatory system NtrB/NtrC, which controls expression of the nitrogen-regulated (ntr) genes in response to nitrogen limitation. Under conditions of nitrogen limitation, NtrB autophosphorylates and transfers the phosphoryl group to NtrC. In the presence of nitrogen, acts as a phosphatase that dephosphorylates and inactivates NtrC. In Escherichia coli O157:H7, this protein is Sensory histidine kinase/phosphatase NtrB (glnL).